A 600-amino-acid chain; its full sequence is Monooxygenase ptmN (600 aa).

The protein belongs to the FMO family. FAD is required as a cofactor.

It functions in the pathway secondary metabolite biosynthesis. Functionally, monooxygenase; part of the gene cluster that mediates the biosynthesis of the indole diterpenes penitrems. The geranylgeranyl diphosphate (GGPP) synthase ptmG catalyzes the first step in penitrem biosynthesis via conversion of farnesyl pyrophosphate and isopentyl pyrophosphate into geranylgeranyl pyrophosphate (GGPP). Condensation of indole-3-glycerol phosphate with GGPP by the prenyl transferase ptmC then forms 3-geranylgeranylindole (3-GGI). Epoxidation by the FAD-dependent monooxygenase ptmM leads to a epoxidized-GGI that is substrate of the terpene cyclase ptmB for cyclization to yield paspaline. Paspaline is subsequently converted to 13-desoxypaxilline by the cytochrome P450 monooxygenase ptmP, the latter being then converted to paxilline by the cytochrome P450 monooxygenase ptmQ. Paxilline is converted to beta-paxitriol via C-10 ketoreduction by the short-chain dehydrogenase ptmH which can be monoprenylated at the C-20 by the indole diterpene prenyltransferase ptmD. A two-step elimination (acetylation and elimination) process performed by the O-acetyltransferase ptmV and ptmI leads to the production of the prenylated form of penijanthine. The FAD-linked oxidoreductase ptmO then converts the prenylated form of penijanthine into PC-M5 which is in turn transformed into PC-M4 by the aromatic dimethylallyltransferase ptmE. Five sequential oxidative transformations performed by the cytochrome P450 monooxygenases ptmK, ptmU, ptmL, ptmN and ptmJ yield the various penitrem compounds. PtmK, ptmU and ptmM are involved in the formation of the key bicyclic ring of penitrem C via the formation of the intermediates secopenitrem D and penitrem D. PtmL catalyzes the epoxidation of penitrem D and C to yield penitrem B and F, respectively. PtmJ catalyzes the last benzylic hydroxylation to convert penitrem B to prenitrem E and penitrem F to penitrem A. The sequence is that of Monooxygenase ptmN from Penicillium ochrochloron.